Consider the following 252-residue polypeptide: Large ribosomal subunit protein uL4 (252 aa).

It belongs to the universal ribosomal protein uL4 family. As to quaternary structure, part of the 50S ribosomal subunit.

One of the primary rRNA binding proteins, this protein initially binds near the 5'-end of the 23S rRNA. It is important during the early stages of 50S assembly. It makes multiple contacts with different domains of the 23S rRNA in the assembled 50S subunit and ribosome. Its function is as follows. Forms part of the polypeptide exit tunnel. The protein is Large ribosomal subunit protein uL4 of Methanococcus aeolicus (strain ATCC BAA-1280 / DSM 17508 / OCM 812 / Nankai-3).